We begin with the raw amino-acid sequence, 222 residues long: UPF0758 protein YicR (222 aa).

An MPN domain is found at 100-222 (PLLSPEMTRE…YVSFAERGWI (123 aa)). The Zn(2+) site is built by His-171, His-173, and Asp-184. The short motif at 171–184 (HNHPSGCAEPSKAD) is the JAMM motif element.

The protein belongs to the UPF0758 family. YicR subfamily.

This chain is UPF0758 protein YicR, found in Escherichia coli (strain K12 / MC4100 / BW2952).